The sequence spans 375 residues: E3 ubiquitin-protein ligase FANCL (375 aa).

Ala-2 is modified (N-acetylalanine). The tract at residues 104 to 294 (LPPPPQFYSS…KDVLEIDFPA (191 aa)) is UBC-RWD region (URD). Cys-307, Cys-310, Cys-324, Cys-329, His-334, Cys-337, Cys-359, and Cys-362 together coordinate Zn(2+). An RING-type; degenerate zinc finger spans residues 307-363 (CGICYAYQLDGTIPDQVCDNSQCGQPFHQICLYEWLRGLLTSRQSFNIIFGECPYCS).

In terms of assembly, interacts with GGN. Belongs to the multisubunit FA complex composed of FANCA, FANCB, FANCC, FANCE, FANCF, FANCG, FANCL/PHF9 and FANCM. The complex is not found in FA patients. In complex with FANCF, FANCA and FANCG, but not with FANCC, nor FANCE, interacts with HES1; this interaction may be essential for the stability and nuclear localization of FA core complex proteins. Interacts with FANCI. Directly interacts (via the RING-type zinc finger) with UBE2T and UBE2W. The RING-type zinc finger domain is monoubiquitinated in the presence of UBE2T and UBE2W.

It localises to the cytoplasm. The protein localises to the nucleus. The enzyme catalyses S-ubiquitinyl-[E2 ubiquitin-conjugating enzyme]-L-cysteine + [acceptor protein]-L-lysine = [E2 ubiquitin-conjugating enzyme]-L-cysteine + N(6)-ubiquitinyl-[acceptor protein]-L-lysine.. It participates in protein modification; protein ubiquitination. Ubiquitin ligase protein that mediates monoubiquitination of FANCD2 in the presence of UBE2T, a key step in the DNA damage pathway. Also mediates monoubiquitination of FANCI. May stimulate the ubiquitin release from UBE2W. May be required for proper primordial germ cell proliferation in the embryonic stage, whereas it is probably not needed for spermatogonial proliferation after birth. This Homo sapiens (Human) protein is E3 ubiquitin-protein ligase FANCL (FANCL).